The primary structure comprises 398 residues: MSAAIDELQAIIAELKSELEEQKTTTRNARERIERMSAEVVDSNPYSRLMALQRMNIVKDYERIRDKAVAIVGVGGVGSVTADMLTRCGIGKLILFDYDKVELANMNRLFFTPDQAGLSKVEAAARTLSFINPDVCIETHNYNITTVDNFDQFLSTISASGIAVGQPVDLVLSCVDNFEARMAINAACNEKNMNWFESGVSENAVSGHIQFVRPGDTACFACAPPLVVAENIDERTLKREGVCAASLPTTMGITASLLVQNALKYLLNFGEVSDYLGYNALSDFFPKMTLRPNTQCDDRNCLVRQKEFHLRPKPVEKLVEVEVSDEPLHACNDWGIELVADNVPTTTTKSPENTNVAFGLRLAYEAPDKSEKSETTATAGDGVSEASLEELMAQMKSM.

ATP-binding residues include Gly76, Asp97, Lys120, Asn143, and Asn177. Zn(2+)-binding residues include Cys219 and Cys222. Cys243 acts as the Glycyl thioester intermediate in catalysis. The Zn(2+) site is built by Cys296 and Cys301.

Belongs to the ubiquitin-activating E1 family. UBA5 subfamily.

Its function is as follows. E1-like enzyme which activates UFM1. The sequence is that of Ubiquitin-like modifier-activating enzyme 5 from Drosophila grimshawi (Hawaiian fruit fly).